The following is a 206-amino-acid chain: Large ribosomal subunit protein uL4 (206 aa).

Residues 63–93 (MYKQKGTGRARHHSARAPQFRGGGKAHGPVV) are disordered. Residues 64–77 (YKQKGTGRARHHSA) are compositionally biased toward basic residues.

The protein belongs to the universal ribosomal protein uL4 family. As to quaternary structure, part of the 50S ribosomal subunit.

One of the primary rRNA binding proteins, this protein initially binds near the 5'-end of the 23S rRNA. It is important during the early stages of 50S assembly. It makes multiple contacts with different domains of the 23S rRNA in the assembled 50S subunit and ribosome. Its function is as follows. Forms part of the polypeptide exit tunnel. This Sinorhizobium medicae (strain WSM419) (Ensifer medicae) protein is Large ribosomal subunit protein uL4.